We begin with the raw amino-acid sequence, 561 residues long: MEEFKNLKEHYENIGKNINMRKEFESNYGATRFKDFSKEVNISKQVGTILLDYSKNRINKETMDLLFELARASKVEEMRNSMFQGEKINITEDRAVLHTALRNRDPSAVIKVDGENVIPSVRKVLDKMRSFSERVRSGQWKGYTGKTITDVVNIGIGGSDLGPVMVTQALKNYANDKVMRAHFVSNIDGTHLAETVKHLCPETTLFIVASKTFTTQETITNAQSARSWFLEKIGGSSVSADVQKHAIGQHFVALSTNEQEVTKFGILKENMFEFWDWVGGRYSVWSAIGLSVALYVGMDHFESFLEGAYHMDQHFLNTPLELNLPVIMGLLGVWYNNFFGCQTQAILPYDQYLSRFPAYFQQGDMESNGKSVQRNGERVTHSTGPIIWGEPGTNGQHAFYQLIHQGQKIIPCDFIASVESHNPLGKHHQILLSNFFAQTEALMKGKNEQEVTNELTKEGLSQEKIKQLLPHKVFEGNRPTNSIFLHKLTPHSLGALIALYEHKIFVQGIIWNINSFDQWGVELGKQLAKSILPELSDNNEVSTHDSSTNGLINFYKSNSKL.

The active-site Proton donor is the Glu366. Active-site residues include His397 and Lys525.

Belongs to the GPI family.

It localises to the cytoplasm. It catalyses the reaction alpha-D-glucose 6-phosphate = beta-D-fructose 6-phosphate. It functions in the pathway carbohydrate degradation; glycolysis; D-glyceraldehyde 3-phosphate and glycerone phosphate from D-glucose: step 2/4. The polypeptide is Glucose-6-phosphate isomerase (gpi) (Dictyostelium discoideum (Social amoeba)).